A 679-amino-acid chain; its full sequence is MIDRYKHQQLRIGSVSPQQISTWANKILPNGEIVGEVTKPYTFHYKTNKPERDGLFCERIFGPIKSGICACGTYRVIGDKKEDPNFCEQCGVEFVDSRIRRYQMGYIKLACPATHVWYLKRLPSYIANLLDKPLKELEGLVYCDFSFARPVAKKPTFLRLRGLFEYEIQSWKYSIPLFFTTQGFDTFRNREISTGAGAIREQLAGLDLRVIIDYSLVEWKELGEERSTGNEWEDRKIGRRKQFLVRRVELAKHFIRTNIEPEWMVLCLLPVLPPELRPIIQMDGGKLMSSDINELYRRVIYRNNILADLLTTSRSTPGDLVMGQEKLVQEAVDTLLDNGIRSRPVRDGQNKVYKSFSDVIEGKEGRFRETLLGKRVDYSGRSVIVVGPTLPLHRCGLPREIAIELFQTFLIRGLIRQHLASDIVGAKSQIREKEPIVWEILQQVMQGHPVLLNRAPTLHRLGIQAFQPILVEGRAICLHPLVCKGFNADFDGDQMAVHVPLSLEAQTEARLLMFSHMNLLSPAMGDPISVPTQDMLIGLYILTSGNPRGICTNRYNPWNRSNYQNERISDNNWKKKEPFFCNSYDAIGAYRQKRIHLDSPLWLRWRLDQRVIASREVPIEVQYESLGTYHEIYGHYIIVRSVKTEILWMYIRTTVGHISLFREMEEAIQGFCRARWYLS.

Zn(2+) contacts are provided by Cys69, Cys71, Cys87, and Cys90. Residues Asp489, Asp491, and Asp493 each contribute to the Mg(2+) site.

The protein belongs to the RNA polymerase beta' chain family. RpoC1 subfamily. In plastids the minimal PEP RNA polymerase catalytic core is composed of four subunits: alpha, beta, beta', and beta''. When a (nuclear-encoded) sigma factor is associated with the core the holoenzyme is formed, which can initiate transcription. Mg(2+) is required as a cofactor. Requires Zn(2+) as cofactor.

It is found in the plastid. Its subcellular location is the chloroplast. It catalyses the reaction RNA(n) + a ribonucleoside 5'-triphosphate = RNA(n+1) + diphosphate. Functionally, DNA-dependent RNA polymerase catalyzes the transcription of DNA into RNA using the four ribonucleoside triphosphates as substrates. The chain is DNA-directed RNA polymerase subunit beta' from Oenothera argillicola (Appalachian evening primrose).